Reading from the N-terminus, the 139-residue chain is Large ribosomal subunit protein uL16 (139 aa).

The segment covering 1-20 (MLIPRRVKHRKQHHPKRRGQ) has biased composition (basic residues). The segment at 1 to 25 (MLIPRRVKHRKQHHPKRRGQAKGGT) is disordered.

It belongs to the universal ribosomal protein uL16 family. In terms of assembly, part of the 50S ribosomal subunit.

Binds 23S rRNA and is also seen to make contacts with the A and possibly P site tRNAs. The sequence is that of Large ribosomal subunit protein uL16 from Streptomyces avermitilis (strain ATCC 31267 / DSM 46492 / JCM 5070 / NBRC 14893 / NCIMB 12804 / NRRL 8165 / MA-4680).